The sequence spans 230 residues: Large ribosomal subunit protein uL1 (230 aa).

It belongs to the universal ribosomal protein uL1 family. In terms of assembly, part of the 50S ribosomal subunit.

Functionally, binds directly to 23S rRNA. The L1 stalk is quite mobile in the ribosome, and is involved in E site tRNA release. In terms of biological role, protein L1 is also a translational repressor protein, it controls the translation of the L11 operon by binding to its mRNA. The polypeptide is Large ribosomal subunit protein uL1 (Rubrobacter xylanophilus (strain DSM 9941 / JCM 11954 / NBRC 16129 / PRD-1)).